The chain runs to 184 residues: Ribosome-recycling factor (184 aa).

Belongs to the RRF family.

Its subcellular location is the cytoplasm. In terms of biological role, responsible for the release of ribosomes from messenger RNA at the termination of protein biosynthesis. May increase the efficiency of translation by recycling ribosomes from one round of translation to another. This Borrelia garinii subsp. bavariensis (strain ATCC BAA-2496 / DSM 23469 / PBi) (Borreliella bavariensis) protein is Ribosome-recycling factor.